Here is a 632-residue protein sequence, read N- to C-terminus: METSAAAASAGGFFPSFLLLAFGTLVAAVLGVAHRLGLFYQLMHKVDKTSIRHGGESVAAVLRAHGVRFVFTLVGGHISPLLVACEKLGIRVVDTRHEVTAVFAADAVARLTGTVGVAAVTAGPGLTNTVTAVKNAQVAQSPVLLLGGAASTLLQKRGALQAIDQMSLFRPLCKFCASVRRVRDIVPTLRTAIAAAQSGTPGPVFVELPLDVLYPYFMVEKEMIPTKLPNSLMGRVVVWYLQNCLANLFVGAWEPRPEGPLPLDIPQASPQQVQRCVEILSRAKRPLLVLGSQALLPPTPANKLRAAVETLGVPCFLGGMSRGLLGRNHPLHIRQNRSAALKKADVVVLAGAVCDFRLSYGRVLNRKSSIIIVNRNRDDLLLNSDIFWKPQEAVQGDVGSFMIKLVEGLQGQMWSSDWAEELRKADQQKEQTYRDKALMPVLQHLNPVWVLQQVEETLPDNALLVVDGGDFVATAAYLVQPRGPLRWLDPGAFGTLGVGAGFALGAKLCQPEAEVWCLFGDGAFGYSLIEFDTFVRHKVPVIALVGNDAGWTQISREQVPRLGSDVACSLAYTDYHKAAMGLGAQGLILSRDNKDQVVKVLREGQQLCQDGHAVVVNILIGRTDFRDGSISV.

A helical membrane pass occupies residues 13–33 (FFPSFLLLAFGTLVAAVLGVA). Residue Glu98 participates in thiamine diphosphate binding. Residue Ser369 is modified to Phosphoserine. Residues 470 to 550 (DFVATAAYLV…VIALVGNDAG (81 aa)) form a thiamine pyrophosphate binding region. Residues Asp521 and Asn547 each contribute to the Mg(2+) site.

Belongs to the TPP enzyme family. Mg(2+) serves as cofactor. It depends on thiamine diphosphate as a cofactor.

It localises to the endoplasmic reticulum membrane. It carries out the reaction 2-hydroxyoctadecanoyl-CoA = heptadecanal + formyl-CoA. The enzyme catalyses (2R)-hydroxyhexadecanoyl-CoA = pentadecanal + formyl-CoA. Endoplasmic reticulum 2-OH acyl-CoA lyase involved in the cleavage (C1 removal) reaction in the fatty acid alpha-oxydation in a thiamine pyrophosphate (TPP)-dependent manner. Involved in the phytosphingosine degradation pathway. This chain is 2-hydroxyacyl-CoA lyase 2 (Ilvbl), found in Mus musculus (Mouse).